A 428-amino-acid chain; its full sequence is Histidine--tRNA ligase (428 aa).

The protein belongs to the class-II aminoacyl-tRNA synthetase family. As to quaternary structure, homodimer.

Its subcellular location is the cytoplasm. It carries out the reaction tRNA(His) + L-histidine + ATP = L-histidyl-tRNA(His) + AMP + diphosphate + H(+). The chain is Histidine--tRNA ligase from Bordetella avium (strain 197N).